Reading from the N-terminus, the 217-residue chain is Protein-L-isoaspartate O-methyltransferase (217 aa).

Ser-61 is an active-site residue.

This sequence belongs to the methyltransferase superfamily. L-isoaspartyl/D-aspartyl protein methyltransferase family.

The protein resides in the cytoplasm. It catalyses the reaction [protein]-L-isoaspartate + S-adenosyl-L-methionine = [protein]-L-isoaspartate alpha-methyl ester + S-adenosyl-L-homocysteine. In terms of biological role, catalyzes the methyl esterification of L-isoaspartyl residues in peptides and proteins that result from spontaneous decomposition of normal L-aspartyl and L-asparaginyl residues. It plays a role in the repair and/or degradation of damaged proteins. The protein is Protein-L-isoaspartate O-methyltransferase of Brucella anthropi (strain ATCC 49188 / DSM 6882 / CCUG 24695 / JCM 21032 / LMG 3331 / NBRC 15819 / NCTC 12168 / Alc 37) (Ochrobactrum anthropi).